The following is a 332-amino-acid chain: L-lactate dehydrogenase A chain (332 aa).

Residues 29 to 57 (GAVG…VEDK) and arginine 99 each bind NAD(+). Substrate-binding residues include arginine 106, asparagine 138, and arginine 169. Asparagine 138 contacts NAD(+). The Proton acceptor role is filled by histidine 193. Residue threonine 248 coordinates substrate.

It belongs to the LDH/MDH superfamily. LDH family. As to quaternary structure, homotetramer.

Its subcellular location is the cytoplasm. It carries out the reaction (S)-lactate + NAD(+) = pyruvate + NADH + H(+). The protein operates within fermentation; pyruvate fermentation to lactate; (S)-lactate from pyruvate: step 1/1. Its function is as follows. Interconverts simultaneously and stereospecifically pyruvate and lactate with concomitant interconversion of NADH and NAD(+). In Python regius (Ball python), this protein is L-lactate dehydrogenase A chain (LDHA).